The primary structure comprises 114 residues: Large ribosomal subunit protein bL19 (114 aa).

This sequence belongs to the bacterial ribosomal protein bL19 family.

This protein is located at the 30S-50S ribosomal subunit interface and may play a role in the structure and function of the aminoacyl-tRNA binding site. The protein is Large ribosomal subunit protein bL19 of Heliobacterium modesticaldum (strain ATCC 51547 / Ice1).